Here is a 626-residue protein sequence, read N- to C-terminus: Probable metalloendopeptidase G1-type (626 aa).

A Zn(2+)-binding site is contributed by H42. The active site involves E45. Position 46 (H46) interacts with Zn(2+).

Belongs to the peptidase M44 family. Requires Zn(2+) as cofactor.

Functionally, seems to be involved in viral proteins maturation by cleavage at Ala-Gly-|-Xaa motifs. In Fowlpox virus (strain NVSL) (FPV), this protein is Probable metalloendopeptidase G1-type.